We begin with the raw amino-acid sequence, 234 residues long: CHD1 helical C-terminal domain containing protein 1 (234 aa).

The disordered stretch occupies residues M1–V38. Residues L44 to A145 are CHD1 helical C-terminal domain (CHCT). The segment at L200–L234 is disordered.

The protein resides in the cytoplasm. It is found in the nucleus. Its function is as follows. May play a role in regulation of apoptosis. The polypeptide is CHD1 helical C-terminal domain containing protein 1 (CHCT1) (Bos taurus (Bovine)).